Here is a 95-residue protein sequence, read N- to C-terminus: Basic phospholipase A2 (95 aa).

N6-palmitoyl lysine attachment occurs at residues lysine 7 and lysine 10. The Ca(2+) site is built by tyrosine 23, glycine 25, and glycine 27. Cystine bridges form between cysteine 24–cysteine 40, cysteine 39–cysteine 77, cysteine 46–cysteine 70, cysteine 53–cysteine 63, and cysteine 57–cysteine 68. Histidine 43 is an active-site residue. Aspartate 44 lines the Ca(2+) pocket. Aspartate 71 is a catalytic residue.

In terms of assembly, monomer. Ca(2+) is required as a cofactor. Expressed by the venom gland.

The protein localises to the secreted. The enzyme catalyses a 1,2-diacyl-sn-glycero-3-phosphocholine + H2O = a 1-acyl-sn-glycero-3-phosphocholine + a fatty acid + H(+). In terms of biological role, PLA2 catalyzes the calcium-dependent hydrolysis of the 2-acyl groups in 3-sn-phosphoglycerides. Induces local and systemic myotoxicity in an intramuscular mouse model. Induces local edema in a mouse footpad assay. Does not exhibit any anticoagulant effects. Does not mediate an antibacterial effect against Gram-negative and Gram-positive bacteria. The polypeptide is Basic phospholipase A2 (Agkistrodon piscivorus leucostoma (Western cottonmouth)).